Consider the following 116-residue polypeptide: MSEKKEARLRRARRARAKIRELGVTRLAIHRTPRHIYAQLISGDGSTVIASASTLDKDLRSGKTGNADAAKAVGALIAERAKAAGVTQVAFDRSGFKYHGRIKALADAAREGGLEF.

Belongs to the universal ribosomal protein uL18 family. As to quaternary structure, part of the 50S ribosomal subunit; part of the 5S rRNA/L5/L18/L25 subcomplex. Contacts the 5S and 23S rRNAs.

This is one of the proteins that bind and probably mediate the attachment of the 5S RNA into the large ribosomal subunit, where it forms part of the central protuberance. This chain is Large ribosomal subunit protein uL18, found in Cellvibrio japonicus (strain Ueda107) (Pseudomonas fluorescens subsp. cellulosa).